Reading from the N-terminus, the 277-residue chain is Large ribosomal subunit protein uL2 (277 aa).

2 disordered regions span residues I24–G55 and R221–K277.

This sequence belongs to the universal ribosomal protein uL2 family. As to quaternary structure, part of the 50S ribosomal subunit. Forms a bridge to the 30S subunit in the 70S ribosome.

Its function is as follows. One of the primary rRNA binding proteins. Required for association of the 30S and 50S subunits to form the 70S ribosome, for tRNA binding and peptide bond formation. It has been suggested to have peptidyltransferase activity; this is somewhat controversial. Makes several contacts with the 16S rRNA in the 70S ribosome. The chain is Large ribosomal subunit protein uL2 from Listeria innocua serovar 6a (strain ATCC BAA-680 / CLIP 11262).